The following is a 74-amino-acid chain: ATP synthase subunit 9, mitochondrial (74 aa).

A run of 2 helical transmembrane segments spans residues 8-28 (MGAG…GNVF) and 50-70 (ILGF…AFLI).

Belongs to the ATPase C chain family. In terms of assembly, F-type ATPases have 2 components, CF(1) - the catalytic core - and CF(0) - the membrane proton channel. CF(1) has five subunits: alpha(3), beta(3), gamma(1), delta(1), epsilon(1). CF(0) has three main subunits: a, b and c.

It localises to the mitochondrion membrane. Functionally, this protein is one of the chains of the nonenzymatic membrane component (F0) of mitochondrial ATPase. This is ATP synthase subunit 9, mitochondrial (ATP9) from Solanum tuberosum (Potato).